The following is a 225-amino-acid chain: PKHD-type hydroxylase YbiX (225 aa).

The Fe2OG dioxygenase domain maps to 78–177; the sequence is TLSTPLFNRY…RVASFMWIQS (100 aa). Fe cation contacts are provided by histidine 96, aspartate 98, and histidine 158. Arginine 168 provides a ligand contact to 2-oxoglutarate.

Fe(2+) is required as a cofactor. The cofactor is L-ascorbate.

The protein is PKHD-type hydroxylase YbiX of Escherichia coli (strain SMS-3-5 / SECEC).